Reading from the N-terminus, the 301-residue chain is Transcriptional activator FeaR (301 aa).

Residues 199–299 (QKVVTLIDDN…GMTPGEYRRK (101 aa)) form the HTH araC/xylS-type domain. 2 consecutive DNA-binding regions (H-T-H motif) follow at residues 217 to 238 (EWIA…ADKG) and 266 to 289 (LAGI…KQRF).

Positive regulator of tynA/maoA and feaB/padA, the genes for 2-phenylethylamine catabolism. The chain is Transcriptional activator FeaR (feaR) from Escherichia coli (strain K12).